We begin with the raw amino-acid sequence, 946 residues long: Protein translocase subunit SecA (946 aa).

ATP-binding positions include Gln-89, 107 to 111 (GEGKT), and Asp-508. A disordered region spans residues 534–569 (PEDSHKPPVPLQRRKDSSVGFGKEENNSKDKKVNHS). The segment covering 546–569 (RRKDSSVGFGKEENNSKDKKVNHS) has biased composition (basic and acidic residues).

Belongs to the SecA family. Monomer and homodimer. Part of the essential Sec protein translocation apparatus which comprises SecA, SecYEG and auxiliary proteins SecDF. Other proteins may also be involved.

The protein resides in the cell inner membrane. Its subcellular location is the cellular thylakoid membrane. It localises to the cytoplasm. The catalysed reaction is ATP + H2O + cellular proteinSide 1 = ADP + phosphate + cellular proteinSide 2.. Part of the Sec protein translocase complex. Interacts with the SecYEG preprotein conducting channel. Has a central role in coupling the hydrolysis of ATP to the transfer of proteins into and across the cell membrane, serving as an ATP-driven molecular motor driving the stepwise translocation of polypeptide chains across the membrane. In terms of biological role, probably participates in protein translocation into and across both the cytoplasmic and thylakoid membranes in cyanobacterial cells. The polypeptide is Protein translocase subunit SecA (Prochlorococcus marinus (strain SARG / CCMP1375 / SS120)).